A 259-amino-acid polypeptide reads, in one-letter code: MLSKRIIPCLDVRDGRLTKGIKFQGNVDIGDPVESARRYYEQGADEIVFYDITASHEGRGIFLDIVEKVASSIFIPFSVGGGINTVDDMRDALNAGAEKVSVNSGAVKDPDIISKGAARFGSQAIVLGMDVKRVAPTEAIPSGYEIVIHGGRKHMGMDALDWAKTAEVLGAGEICVNSIDADGTKDGYELTLTRMISDAVQIPVIASGGAGHPAHMYDALTKGGASAALIASIVHYGEYTIPDLKKQIQAMGCKMRLTW.

Catalysis depends on residues Asp-11 and Asp-130.

It belongs to the HisA/HisF family. As to quaternary structure, heterodimer of HisH and HisF.

It localises to the cytoplasm. It carries out the reaction 5-[(5-phospho-1-deoxy-D-ribulos-1-ylimino)methylamino]-1-(5-phospho-beta-D-ribosyl)imidazole-4-carboxamide + L-glutamine = D-erythro-1-(imidazol-4-yl)glycerol 3-phosphate + 5-amino-1-(5-phospho-beta-D-ribosyl)imidazole-4-carboxamide + L-glutamate + H(+). It participates in amino-acid biosynthesis; L-histidine biosynthesis; L-histidine from 5-phospho-alpha-D-ribose 1-diphosphate: step 5/9. IGPS catalyzes the conversion of PRFAR and glutamine to IGP, AICAR and glutamate. The HisF subunit catalyzes the cyclization activity that produces IGP and AICAR from PRFAR using the ammonia provided by the HisH subunit. The chain is Imidazole glycerol phosphate synthase subunit HisF from Oleidesulfovibrio alaskensis (strain ATCC BAA-1058 / DSM 17464 / G20) (Desulfovibrio alaskensis).